Reading from the N-terminus, the 114-residue chain is Transcription factor S1 (114 aa).

Residues 1-43 form an N-ZR region; that stretch reads MIVVKFCPKCNSMMVPKKSNGKNVYRCTKCGYEKEVPETTIVV. Zn(2+) contacts are provided by cysteine 7, cysteine 10, cysteine 27, cysteine 30, cysteine 75, and cysteine 78. Positions 63–114 are C-ZR; it reads MPSGAQKIKGVLCPSCKNDEAYFWILQTRRADEPPTRFYKCTKCGKVWREYE. The segment at 71 to 111 adopts a TFIIS-type zinc-finger fold; it reads KGVLCPSCKNDEAYFWILQTRRADEPPTRFYKCTKCGKVWR. Active-site residues include aspartate 94 and glutamate 95. Zn(2+) is bound by residues cysteine 103 and cysteine 106.

Belongs to the archaeal RpoM/eukaryotic RPA12/RPB9/RPC11 RNA polymerase family. Interacts with RNA polymerase; probably competes with TFS4 for the same binding site. Zn(2+) serves as cofactor.

In terms of biological role, induces RNA cleavage activity in the RNA polymerase. Induces rapid cleavage of a stalled transcription elongation complex with a 2-nucleotide reduction at the 3' end of the nascent RNA. Truncated RNA is able to resume elongation. During transcription elongation it enhances processivity. Involved in transcriptional proofreading and fidelity. Misincorporation of nucleotides during elongation of transcription leads to arrested elongation complexes which are rescued by TFS-promoted removal of a dinucleotide from the 3'-end. TFS1 is able to induce a cleavage resynthesis cycle in stalled elongation complexes (resulting from the next missing nucleotide or a reduced incorporation rate of a wrong nucleotide) preventing misincorporation and enabling proofreading in a post-incorporation manner. Pausing of elongation complexes is the main determinant of TFS-induced RNA cleavage. The polypeptide is Transcription factor S1 (Saccharolobus solfataricus (strain ATCC 35092 / DSM 1617 / JCM 11322 / P2) (Sulfolobus solfataricus)).